A 333-amino-acid polypeptide reads, in one-letter code: C4-dicarboxylate-binding periplasmic protein DctP (333 aa).

Residues 1 to 26 (MLTRRILGALVGATALSLALSVPALA) form the signal peptide.

The protein belongs to the bacterial solute-binding protein 7 family. As to quaternary structure, the complex comprises the extracytoplasmic solute receptor protein DctP, and the two transmembrane proteins DctQ and DctM.

It localises to the periplasm. Part of the tripartite ATP-independent periplasmic (TRAP) transport system DctPQM involved in C4-dicarboxylates uptake. Binds C4-dicarboxylates such as fumarate, succinate, L-malate and D-malate. In Rhodobacter capsulatus (Rhodopseudomonas capsulata), this protein is C4-dicarboxylate-binding periplasmic protein DctP.